The sequence spans 417 residues: MNTNIANQLRAAKKATTDLNLIQSDTRTIILKTLAANLEKHIENIIQENQKDLSLMLEQDPRYDRLLLNKERILSLVNDVRKVANLPNPLGVNLFEKSMPNGLSIKKITVPLGVIAVIYESRPNVTIDIFSLCFKSGNVCILKGGKEAHFTNSYLLLLIKNTLKNFNINTDIVCLLPPERALMTQLLNATGLVDLCIPRGSQNLINFVRDNAKIPVIETGAGIVHTYFDKSGDLGKGKKIINNAKTRRVSVCNALDTLIIHADRLKDLPELVETLSQKNVIIYADQDAYHVLDKNYPEQLLIKAKPQDFGHEFLDYKLAIKTVPNIKAAIDHIQQFSSHHSEAVIAEDESAIDKFLTEVDAAAVYANASTAFTDGGEFGLGAEIGISTQKVHARGPMGLEALTSYKWVIRGTGQIRD.

This sequence belongs to the gamma-glutamyl phosphate reductase family.

The protein localises to the cytoplasm. It carries out the reaction L-glutamate 5-semialdehyde + phosphate + NADP(+) = L-glutamyl 5-phosphate + NADPH + H(+). It participates in amino-acid biosynthesis; L-proline biosynthesis; L-glutamate 5-semialdehyde from L-glutamate: step 2/2. Functionally, catalyzes the NADPH-dependent reduction of L-glutamate 5-phosphate into L-glutamate 5-semialdehyde and phosphate. The product spontaneously undergoes cyclization to form 1-pyrroline-5-carboxylate. This is Gamma-glutamyl phosphate reductase from Legionella pneumophila subsp. pneumophila (strain Philadelphia 1 / ATCC 33152 / DSM 7513).